Here is a 355-residue protein sequence, read N- to C-terminus: MELFDKVKALTEIQATSGFEGPVRDYLKARMVELGYQPEFDGLGGIFVTKASKVENAPRIMVAAHMDEVGFMVSSIKADGTFRVVPLGGWNPLVVSGQRFTLFTRTGKKIPVVTGGLPPHLLRGTGVTPQIPAISDIIFDGAFENAAEAAEFGIAQGDLIIPETETILSANGKNIISKAWDNRYGCLMILELLEFLADKELPVTLIIGANVQEEVGLRGAKVSTTKFNPDLFFAVDCSPASDTFGDDNGRLGEGTTLRFFDPGHIMLPGMKNFLLDTANHAKVKTQVYMAKGGTDAGAAHLANGGVPSTTIGVVARYIHSHQTIFNIDDFLQAQTFLRAIITSLNTEKVAEIKNY.

Residues His-65 and Asp-181 each coordinate a divalent metal cation. The active-site Proton acceptor is Glu-213. Positions 214, 236, and 319 each coordinate a divalent metal cation.

This sequence belongs to the peptidase M42 family. A divalent metal cation serves as cofactor.

It catalyses the reaction Release of N-terminal glutamate (and to a lesser extent aspartate) from a peptide.. This Lactococcus lactis subsp. cremoris (strain MG1363) protein is Glutamyl aminopeptidase (pepA).